Reading from the N-terminus, the 392-residue chain is LL-diaminopimelate aminotransferase (392 aa).

Positions 13 and 38 each coordinate substrate. Pyridoxal 5'-phosphate-binding positions include Tyr-67, 102–103 (SK), Tyr-127, Asn-177, Tyr-208, and 236–238 (SCS). Residues Lys-103, Tyr-127, and Asn-177 each coordinate substrate. Lys-239 is subject to N6-(pyridoxal phosphate)lysine. Residue Arg-247 participates in pyridoxal 5'-phosphate binding. Arg-366 contacts substrate.

It belongs to the class-I pyridoxal-phosphate-dependent aminotransferase family. LL-diaminopimelate aminotransferase subfamily. As to quaternary structure, homodimer. Pyridoxal 5'-phosphate serves as cofactor.

It carries out the reaction (2S,6S)-2,6-diaminopimelate + 2-oxoglutarate = (S)-2,3,4,5-tetrahydrodipicolinate + L-glutamate + H2O + H(+). The protein operates within amino-acid biosynthesis; L-lysine biosynthesis via DAP pathway; LL-2,6-diaminopimelate from (S)-tetrahydrodipicolinate (aminotransferase route): step 1/1. Its function is as follows. Involved in the synthesis of meso-diaminopimelate (m-DAP or DL-DAP), required for both lysine and peptidoglycan biosynthesis. Catalyzes the direct conversion of tetrahydrodipicolinate to LL-diaminopimelate. Can also use m-DAP instead of LL-DAP as the amino-group donor. The protein is LL-diaminopimelate aminotransferase of Gloeobacter violaceus (strain ATCC 29082 / PCC 7421).